A 1311-amino-acid polypeptide reads, in one-letter code: Zinc finger protein 521 (1311 aa).

A C2H2-type 1; degenerate zinc finger spans residues 47–67 (HSCDSCLQVFESLSDITEHKI). Residues 81-108 (DPSCSWPASSPSSKDQTSPSHGEGCDFG) form a disordered region. The segment covering 83 to 102 (SCSWPASSPSSKDQTSPSHG) has biased composition (low complexity). 7 consecutive C2H2-type zinc fingers follow at residues 118–140 (YPCQ…EQSH), 146–168 (FKCT…IKLH), 174–196 (YHCS…LKTH), 202–224 (YKCA…MQVH), 246–269 (QKCS…AECH), 281–304 (LQCM…EQVH), and 310–332 (NSCS…MDSH). Positions 357 to 398 (TTPDSNLSVDSSTMVEAAPPIPKSRGRKRAAQQTSDMTGPSS) are disordered. Polar residues-rich tracts occupy residues 359–370 (PDSNLSVDSSTM) and 387–398 (AQQTSDMTGPSS). The C2H2-type 9; degenerate zinc finger occupies 405–429 (YSCIYCNKQLFSSLAVLQIHLKTMH). 3 consecutive C2H2-type zinc fingers follow at residues 437-460 (HICQ…KQVH), 477-500 (YQCN…RCSH), and 513-536 (FFCP…RQVH). Ser546 is subject to Phosphoserine. A C2H2-type 13; atypical zinc finger spans residues 560–585 (YSCSYCTNSPIFNSVLKLNKHIKENH). Phosphoserine occurs at positions 605 and 608. C2H2-type zinc fingers lie at residues 634-656 (YICN…LKTH), 664-686 (LTCP…VTIH), 694-717 (YICE…LDMH), 722-745 (FRCT…AVKH), 752-775 (YRCT…KHNH), 783-805 (HKCI…ITTH), and 809-832 (YNCR…REKH). Residues 863-883 (TNSQESHNSHDGSEEDVDSSE) form a disordered region. The C2H2-type 21; degenerate zinc-finger motif lies at 886 to 908 (YGCDICGAAYTMETLLQNHQLRD). C2H2-type zinc fingers lie at residues 930–952 (YKCN…MQTH), 959–981 (YMCP…KVTH), and 1020–1042 (FRCV…GTFH). The C2H2-type 25; degenerate zinc-finger motif lies at 1065–1083 (YKCASCLKEFRSKQDLVKL). Positions 1105-1119 (PGLSLPPGASRPGLG) are enriched in low complexity. Residues 1105-1136 (PGLSLPPGASRPGLGQNESLSAMEGKGKAGGL) form a disordered region. C2H2-type zinc fingers lie at residues 1138–1161 (TRCS…QTVH), 1195–1217 (YQCI…VANH), 1225–1247 (HECK…LIEH), 1256–1279 (FKCP…FSAH), and 1286–1309 (YDCT…MTQH). Lys1146 is covalently cross-linked (Glycyl lysine isopeptide (Lys-Gly) (interchain with G-Cter in SUMO2)).

Belongs to the krueppel C2H2-type zinc-finger protein family. As to quaternary structure, interacts with EBF1. Interacts with SMAD1 and SMAD4. In terms of tissue distribution, widely expressed. Expressed in all B-cell stages.

The protein resides in the nucleus. In terms of biological role, transcription factor that can both act as an activator or a repressor depending on the context. Involved in BMP signaling and in the regulation of the immature compartment of the hematopoietic system. Associates with SMADs in response to BMP2 leading to activate transcription of BMP target genes. Acts as a transcriptional repressor via its interaction with EBF1, a transcription factor involved specification of B-cell lineage; this interaction preventing EBF1 to bind DNA and activate target genes. The polypeptide is Zinc finger protein 521 (Znf521) (Mus musculus (Mouse)).